Here is a 178-residue protein sequence, read N- to C-terminus: Large ribosomal subunit protein uL10 (178 aa).

Belongs to the universal ribosomal protein uL10 family. In terms of assembly, part of the ribosomal stalk of the 50S ribosomal subunit. The N-terminus interacts with L11 and the large rRNA to form the base of the stalk. The C-terminus forms an elongated spine to which L12 dimers bind in a sequential fashion forming a multimeric L10(L12)X complex.

Its function is as follows. Forms part of the ribosomal stalk, playing a central role in the interaction of the ribosome with GTP-bound translation factors. The chain is Large ribosomal subunit protein uL10 from Mycobacterium tuberculosis (strain ATCC 25177 / H37Ra).